A 455-amino-acid polypeptide reads, in one-letter code: Chromosomal replication initiator protein DnaA 2 (455 aa).

The interval 1–95 (MLTCNDCSTW…KRSSPQIAAS (95 aa)) is domain I, interacts with DnaA modulators. The segment at 96 to 112 (VTKPAVEVSEENKDFQL) is domain II. The domain III, AAA+ region stretch occupies residues 113-328 (KLNGAYRFDN…GAINKLTAYC (216 aa)). 4 residues coordinate ATP: glycine 157, glycine 159, lysine 160, and threonine 161. A domain IV, binds dsDNA region spans residues 329 to 455 (LLFNKPLTET…IAIDSPQHFV (127 aa)).

Belongs to the DnaA family. Oligomerizes as a right-handed, spiral filament on DNA at oriC.

The protein resides in the cytoplasm. Functionally, plays an essential role in the initiation and regulation of chromosomal replication. ATP-DnaA binds to the origin of replication (oriC) to initiate formation of the DNA replication initiation complex once per cell cycle. Binds the DnaA box (a 9 base pair repeat at the origin) and separates the double-stranded (ds)DNA. Forms a right-handed helical filament on oriC DNA; dsDNA binds to the exterior of the filament while single-stranded (ss)DNA is stabiized in the filament's interior. The ATP-DnaA-oriC complex binds and stabilizes one strand of the AT-rich DNA unwinding element (DUE), permitting loading of DNA polymerase. After initiation quickly degrades to an ADP-DnaA complex that is not apt for DNA replication. Binds acidic phospholipids. The polypeptide is Chromosomal replication initiator protein DnaA 2 (Chlamydia muridarum (strain MoPn / Nigg)).